The sequence spans 362 residues: Probable dual-specificity RNA methyltransferase RlmN (362 aa).

Glutamate 99 (proton acceptor) is an active-site residue. Positions 105–341 (SPDRHTVCVS…VTVRKSQGAS (237 aa)) constitute a Radical SAM core domain. The cysteines at positions 112 and 346 are disulfide-linked. Residues cysteine 119, cysteine 123, and cysteine 126 each contribute to the [4Fe-4S] cluster site. S-adenosyl-L-methionine-binding positions include 171–172 (GE), serine 204, 227–229 (SLH), and asparagine 303. Cysteine 346 (S-methylcysteine intermediate) is an active-site residue.

Belongs to the radical SAM superfamily. RlmN family. [4Fe-4S] cluster serves as cofactor.

It localises to the cytoplasm. The enzyme catalyses adenosine(2503) in 23S rRNA + 2 reduced [2Fe-2S]-[ferredoxin] + 2 S-adenosyl-L-methionine = 2-methyladenosine(2503) in 23S rRNA + 5'-deoxyadenosine + L-methionine + 2 oxidized [2Fe-2S]-[ferredoxin] + S-adenosyl-L-homocysteine. The catalysed reaction is adenosine(37) in tRNA + 2 reduced [2Fe-2S]-[ferredoxin] + 2 S-adenosyl-L-methionine = 2-methyladenosine(37) in tRNA + 5'-deoxyadenosine + L-methionine + 2 oxidized [2Fe-2S]-[ferredoxin] + S-adenosyl-L-homocysteine. In terms of biological role, specifically methylates position 2 of adenine 2503 in 23S rRNA and position 2 of adenine 37 in tRNAs. The sequence is that of Probable dual-specificity RNA methyltransferase RlmN from Chlorobium phaeobacteroides (strain BS1).